The following is a 451-amino-acid chain: Probable V-type proton ATPase subunit H 1 (451 aa).

The protein belongs to the V-ATPase H subunit family. V-ATPase is a heteromultimeric enzyme made up of two complexes: the ATP-hydrolytic V1 complex and the proton translocation V0 complex. The V1 complex consists of three catalytic AB heterodimers that form a heterohexamer, three peripheral stalks each consisting of EG heterodimers, one central rotor including subunits D and F, and the regulatory subunits C and H. The proton translocation complex V0 consists of the proton transport subunit a, a ring of proteolipid subunits c9c'', rotary subunit d, subunits e and f, and the accessory subunits vah-19/Ac45 and vah-20/PRR.

Its function is as follows. Subunit of the V1 complex of vacuolar(H+)-ATPase (V-ATPase), a multisubunit enzyme composed of a peripheral complex (V1) that hydrolyzes ATP and a membrane integral complex (V0) that translocates protons. V-ATPase is responsible for acidifying and maintaining the pH of intracellular compartments and in some cell types, is targeted to the plasma membrane, where it is responsible for acidifying the extracellular environment. Subunit H is essential for V-ATPase activity, but not for the assembly of the complex. The protein is Probable V-type proton ATPase subunit H 1 of Caenorhabditis elegans.